A 176-amino-acid chain; its full sequence is NAD(P)H-quinone oxidoreductase subunit 6, chloroplastic (176 aa).

Helical transmembrane passes span 10–30, 32–52, 61–81, 95–115, and 152–172; these read FILV…VLLP, PIYS…LYIL, AQLL…VMFL, VGDG…ITTI, and FLIP…GAIA.

This sequence belongs to the complex I subunit 6 family. NDH is composed of at least 16 different subunits, 5 of which are encoded in the nucleus.

The protein localises to the plastid. The protein resides in the chloroplast thylakoid membrane. It catalyses the reaction a plastoquinone + NADH + (n+1) H(+)(in) = a plastoquinol + NAD(+) + n H(+)(out). It carries out the reaction a plastoquinone + NADPH + (n+1) H(+)(in) = a plastoquinol + NADP(+) + n H(+)(out). In terms of biological role, NDH shuttles electrons from NAD(P)H:plastoquinone, via FMN and iron-sulfur (Fe-S) centers, to quinones in the photosynthetic chain and possibly in a chloroplast respiratory chain. The immediate electron acceptor for the enzyme in this species is believed to be plastoquinone. Couples the redox reaction to proton translocation, and thus conserves the redox energy in a proton gradient. The polypeptide is NAD(P)H-quinone oxidoreductase subunit 6, chloroplastic (ndhG) (Trachelium caeruleum (Blue throatwort)).